Reading from the N-terminus, the 209-residue chain is Thiamine-phosphate synthase 1 (209 aa).

4-amino-2-methyl-5-(diphosphooxymethyl)pyrimidine is bound by residues 39 to 43 (QFREK) and asparagine 74. The Mg(2+) site is built by aspartate 75 and aspartate 94. A 4-amino-2-methyl-5-(diphosphooxymethyl)pyrimidine-binding site is contributed by serine 112. 138–140 (TQS) is a 2-[(2R,5Z)-2-carboxy-4-methylthiazol-5(2H)-ylidene]ethyl phosphate binding site. Lysine 141 contributes to the 4-amino-2-methyl-5-(diphosphooxymethyl)pyrimidine binding site. 2-[(2R,5Z)-2-carboxy-4-methylthiazol-5(2H)-ylidene]ethyl phosphate is bound by residues glycine 170 and 190-191 (IS).

Belongs to the thiamine-phosphate synthase family. It depends on Mg(2+) as a cofactor.

The catalysed reaction is 2-[(2R,5Z)-2-carboxy-4-methylthiazol-5(2H)-ylidene]ethyl phosphate + 4-amino-2-methyl-5-(diphosphooxymethyl)pyrimidine + 2 H(+) = thiamine phosphate + CO2 + diphosphate. It carries out the reaction 2-(2-carboxy-4-methylthiazol-5-yl)ethyl phosphate + 4-amino-2-methyl-5-(diphosphooxymethyl)pyrimidine + 2 H(+) = thiamine phosphate + CO2 + diphosphate. It catalyses the reaction 4-methyl-5-(2-phosphooxyethyl)-thiazole + 4-amino-2-methyl-5-(diphosphooxymethyl)pyrimidine + H(+) = thiamine phosphate + diphosphate. It participates in cofactor biosynthesis; thiamine diphosphate biosynthesis; thiamine phosphate from 4-amino-2-methyl-5-diphosphomethylpyrimidine and 4-methyl-5-(2-phosphoethyl)-thiazole: step 1/1. Functionally, condenses 4-methyl-5-(beta-hydroxyethyl)thiazole monophosphate (THZ-P) and 2-methyl-4-amino-5-hydroxymethyl pyrimidine pyrophosphate (HMP-PP) to form thiamine monophosphate (TMP). The sequence is that of Thiamine-phosphate synthase 1 from Streptococcus pneumoniae (strain ATCC BAA-255 / R6).